Here is a 1288-residue protein sequence, read N- to C-terminus: 5-oxoprolinase (1288 aa).

Thr151 is modified (phosphothreonine). A disordered region spans residues 1248–1272; the sequence is PGGGGYGDPEDPAPPPGSPPQALAF. The residue at position 1265 (Ser1265) is a Phosphoserine.

It belongs to the oxoprolinase family. In terms of assembly, homodimer.

Its subcellular location is the cytoplasm. The protein resides in the cytosol. The catalysed reaction is 5-oxo-L-proline + ATP + 2 H2O = L-glutamate + ADP + phosphate + H(+). Catalyzes the cleavage of 5-oxo-L-proline to form L-glutamate coupled to the hydrolysis of ATP to ADP and inorganic phosphate. This Homo sapiens (Human) protein is 5-oxoprolinase.